A 471-amino-acid polypeptide reads, in one-letter code: Ribulose bisphosphate carboxylase large chain (471 aa).

Positions 115 and 165 each coordinate substrate. The active-site Proton acceptor is K167. A substrate-binding site is contributed by K169. K193, D195, and E196 together coordinate Mg(2+). The residue at position 193 (K193) is an N6-carboxylysine. Residue H286 is the Proton acceptor of the active site. Substrate-binding residues include R287, H319, and S371.

It belongs to the RuBisCO large chain family. Type I subfamily. As to quaternary structure, heterohexadecamer of 8 large chains and 8 small chains. Requires Mg(2+) as cofactor.

It localises to the carboxysome. It catalyses the reaction 2 (2R)-3-phosphoglycerate + 2 H(+) = D-ribulose 1,5-bisphosphate + CO2 + H2O. It carries out the reaction D-ribulose 1,5-bisphosphate + O2 = 2-phosphoglycolate + (2R)-3-phosphoglycerate + 2 H(+). RuBisCO catalyzes two reactions: the carboxylation of D-ribulose 1,5-bisphosphate, the primary event in carbon dioxide fixation, as well as the oxidative fragmentation of the pentose substrate in the photorespiration process. Both reactions occur simultaneously and in competition at the same active site. The chain is Ribulose bisphosphate carboxylase large chain from Prochlorococcus marinus (strain MIT 9515).